Here is a 595-residue protein sequence, read N- to C-terminus: Potassium-transporting ATPase potassium-binding subunit (595 aa).

10 helical membrane passes run 9-29, 63-83, 135-155, 177-197, 285-305, 312-332, 412-432, 451-471, 516-536, and 560-580; these read ICGY…YMAA, TGYA…VYAL, GLTV…VALI, ILHI…GQGV, FLEM…FGVM, GWVI…VTVL, GLYG…LMIG, AIVI…AVML, LMLG…VLAI, and FVGL…IPAL.

Belongs to the KdpA family. As to quaternary structure, the system is composed of three essential subunits: KdpA, KdpB and KdpC.

Its subcellular location is the cell inner membrane. Functionally, part of the high-affinity ATP-driven potassium transport (or Kdp) system, which catalyzes the hydrolysis of ATP coupled with the electrogenic transport of potassium into the cytoplasm. This subunit binds the periplasmic potassium ions and delivers the ions to the membrane domain of KdpB through an intramembrane tunnel. The sequence is that of Potassium-transporting ATPase potassium-binding subunit from Methylococcus capsulatus (strain ATCC 33009 / NCIMB 11132 / Bath).